A 204-amino-acid polypeptide reads, in one-letter code: Elongation factor Ts (204 aa).

The interval T80–V83 is involved in Mg(2+) ion dislocation from EF-Tu.

This sequence belongs to the EF-Ts family.

The protein resides in the cytoplasm. In terms of biological role, associates with the EF-Tu.GDP complex and induces the exchange of GDP to GTP. It remains bound to the aminoacyl-tRNA.EF-Tu.GTP complex up to the GTP hydrolysis stage on the ribosome. This Thermoanaerobacter sp. (strain X514) protein is Elongation factor Ts.